The primary structure comprises 314 residues: Methionyl-tRNA formyltransferase (314 aa).

113–116 (SLLP) lines the (6S)-5,6,7,8-tetrahydrofolate pocket.

It belongs to the Fmt family.

The enzyme catalyses L-methionyl-tRNA(fMet) + (6R)-10-formyltetrahydrofolate = N-formyl-L-methionyl-tRNA(fMet) + (6S)-5,6,7,8-tetrahydrofolate + H(+). In terms of biological role, attaches a formyl group to the free amino group of methionyl-tRNA(fMet). The formyl group appears to play a dual role in the initiator identity of N-formylmethionyl-tRNA by promoting its recognition by IF2 and preventing the misappropriation of this tRNA by the elongation apparatus. This is Methionyl-tRNA formyltransferase from Pseudomonas aeruginosa (strain LESB58).